A 346-amino-acid chain; its full sequence is Phosphoribosylformylglycinamidine cyclo-ligase (346 aa).

It belongs to the AIR synthase family.

Its subcellular location is the cytoplasm. It catalyses the reaction 2-formamido-N(1)-(5-O-phospho-beta-D-ribosyl)acetamidine + ATP = 5-amino-1-(5-phospho-beta-D-ribosyl)imidazole + ADP + phosphate + H(+). The protein operates within purine metabolism; IMP biosynthesis via de novo pathway; 5-amino-1-(5-phospho-D-ribosyl)imidazole from N(2)-formyl-N(1)-(5-phospho-D-ribosyl)glycinamide: step 2/2. This is Phosphoribosylformylglycinamidine cyclo-ligase from Synechococcus sp. (strain CC9311).